We begin with the raw amino-acid sequence, 217 residues long: 3,4-dihydroxy-2-butanone 4-phosphate synthase (217 aa).

D-ribulose 5-phosphate-binding positions include 37–38 (RE), Asp42, 150–154 (RRGHT), and Glu174. Glu38 contacts Mg(2+). His153 serves as a coordination point for Mg(2+).

This sequence belongs to the DHBP synthase family. Homodimer. Mg(2+) is required as a cofactor. Mn(2+) serves as cofactor.

The enzyme catalyses D-ribulose 5-phosphate = (2S)-2-hydroxy-3-oxobutyl phosphate + formate + H(+). It functions in the pathway cofactor biosynthesis; riboflavin biosynthesis; 2-hydroxy-3-oxobutyl phosphate from D-ribulose 5-phosphate: step 1/1. In terms of biological role, catalyzes the conversion of D-ribulose 5-phosphate to formate and 3,4-dihydroxy-2-butanone 4-phosphate. The polypeptide is 3,4-dihydroxy-2-butanone 4-phosphate synthase (Shewanella sp. (strain MR-4)).